Reading from the N-terminus, the 354-residue chain is MALLKVKFNQKKRVKLAQGLWLMNWFSVFAGIIVFSMGLFLKIELRKRSEVMDNSESHFVPNSLILMGILSCAFNGFAGKICYDSLDPAKFAKWKPLLKPYLALCFFFNILLFFVALICFLMRGSLESTLAQGLKNSMKFYRDTDTPGRCFMKKTIDMLQIEFKCCGNNGFKDWFEIQWISNRYLDFSSKEVKDRIKSNVDGRYLVDGVPFSCCNPSSPRPCIQYQVTNNSAHYSYDYQTEELNLWGRGCREALLHYYSSMMSSMGAVVLLVWLFEMSVMVGLRLLHTSLESIANPEDPECESEGWILENSLKDTLKSALESLKKIGKFNQVEAGAEGAEGEEAGKTPAITTVS.

Residues 1–24 (MALLKVKFNQKKRVKLAQGLWLMN) are Cytoplasmic-facing. Residues 25–43 (WFSVFAGIIVFSMGLFLKI) form a helical membrane-spanning segment. Topologically, residues 44–61 (ELRKRSEVMDNSESHFVP) are lumenal. A helical transmembrane segment spans residues 62-80 (NSLILMGILSCAFNGFAGK). Residues 81 to 99 (ICYDSLDPAKFAKWKPLLK) are Cytoplasmic-facing. The chain crosses the membrane as a helical span at residues 100-123 (PYLALCFFFNILLFFVALICFLMR). Residues 124-264 (GSLESTLAQG…LHYYSSMMSS (141 aa)) lie on the Lumenal side of the membrane. Asparagine 229 is a glycosylation site (N-linked (GlcNAc...) asparagine). A helical transmembrane segment spans residues 265–290 (MGAVVLLVWLFEMSVMVGLRLLHTSL). The Cytoplasmic portion of the chain corresponds to 291–354 (ESIANPEDPE…GKTPAITTVS (64 aa)). The segment at 335–354 (GAEGAEGEEAGKTPAITTVS) is disordered.

This sequence belongs to the PRPH2/ROM1 family. In terms of assembly, homodimer; disulfide-linked.

The protein resides in the membrane. May be involved in the morphogenesis of retina outer segment disks and the development and maintenance of the retina ultrastructure. The sequence is that of Peripherin-2 (PRPH2) from Gallus gallus (Chicken).